The sequence spans 1052 residues: Kruppel-like factor 18 (1052 aa).

3 consecutive C2H2-type zinc fingers follow at residues 964 to 988 (YVCT…MRKH), 994 to 1018 (YVCD…KKRH), and 1024 to 1046 (YLCS…AKVH).

The protein belongs to the krueppel C2H2-type zinc-finger protein family.

The protein resides in the nucleus. The polypeptide is Kruppel-like factor 18 (Homo sapiens (Human)).